The sequence spans 142 residues: Ornithine decarboxylase antizyme (142 aa).

Low complexity predominate over residues 1 to 19; sequence MSSSIVLSNNNSNSNSMSM. A disordered region spans residues 1 to 34; that stretch reads MSSSIVLSNNNSNSNSMSMIGQSPPCCSDVPNTP.

This sequence belongs to the ODC antizyme family. As to quaternary structure, interacts with ODC1 and thereby sterically blocks ODC homodimerization.

In terms of biological role, ornithine decarboxylase (ODC) antizyme protein that negatively regulates ODC activity and intracellular polyamine biosynthesis and uptake in response to increased intracellular polyamine levels. Binds to ODC monomers, inhibiting the assembly of the functional ODC homodimer, and targets the monomers for ubiquitin-independent proteolytic destruction by the 26S proteasome. This chain is Ornithine decarboxylase antizyme, found in Pristionchus pacificus (Parasitic nematode).